Reading from the N-terminus, the 128-residue chain is Glycine cleavage system H protein (128 aa).

In terms of domain architecture, Lipoyl-binding spans 22 to 104 (TALVGVTDYA…YASGWLVKIK (83 aa)). Position 63 is an N6-lipoyllysine (Lys-63).

It belongs to the GcvH family. As to quaternary structure, the glycine cleavage system is composed of four proteins: P, T, L and H. Requires (R)-lipoate as cofactor.

The glycine cleavage system catalyzes the degradation of glycine. The H protein shuttles the methylamine group of glycine from the P protein to the T protein. In Halothermothrix orenii (strain H 168 / OCM 544 / DSM 9562), this protein is Glycine cleavage system H protein.